The chain runs to 345 residues: S-adenosylmethionine:tRNA ribosyltransferase-isomerase (345 aa).

This sequence belongs to the QueA family. Monomer.

The protein localises to the cytoplasm. The catalysed reaction is 7-aminomethyl-7-carbaguanosine(34) in tRNA + S-adenosyl-L-methionine = epoxyqueuosine(34) in tRNA + adenine + L-methionine + 2 H(+). The protein operates within tRNA modification; tRNA-queuosine biosynthesis. Transfers and isomerizes the ribose moiety from AdoMet to the 7-aminomethyl group of 7-deazaguanine (preQ1-tRNA) to give epoxyqueuosine (oQ-tRNA). This Helicobacter pylori (strain ATCC 700392 / 26695) (Campylobacter pylori) protein is S-adenosylmethionine:tRNA ribosyltransferase-isomerase.